We begin with the raw amino-acid sequence, 191 residues long: Protein GrpE (191 aa).

Positions 1 to 21 (MSDKKKNAEEFEETFSDKTSE) are enriched in basic and acidic residues. The interval 1–39 (MSDKKKNAEEFEETFSDKTSEDESTVENETVEENENEDV) is disordered. A compositionally biased stretch (acidic residues) spans 22–38 (DESTVENETVEENENED).

It belongs to the GrpE family. Homodimer.

The protein localises to the cytoplasm. Functionally, participates actively in the response to hyperosmotic and heat shock by preventing the aggregation of stress-denatured proteins, in association with DnaK and GrpE. It is the nucleotide exchange factor for DnaK and may function as a thermosensor. Unfolded proteins bind initially to DnaJ; upon interaction with the DnaJ-bound protein, DnaK hydrolyzes its bound ATP, resulting in the formation of a stable complex. GrpE releases ADP from DnaK; ATP binding to DnaK triggers the release of the substrate protein, thus completing the reaction cycle. Several rounds of ATP-dependent interactions between DnaJ, DnaK and GrpE are required for fully efficient folding. This chain is Protein GrpE, found in Tetragenococcus halophilus (Pediococcus halophilus).